The sequence spans 272 residues: HMP-PP phosphatase (272 aa).

The active-site Nucleophile is the aspartate 8. Mg(2+) is bound by residues aspartate 8, aspartate 10, and aspartate 212.

This sequence belongs to the HAD-like hydrolase superfamily. Cof family. The cofactor is Mg(2+).

The enzyme catalyses 4-amino-2-methyl-5-(diphosphooxymethyl)pyrimidine + H2O = 4-amino-2-methyl-5-(phosphooxymethyl)pyrimidine + phosphate + H(+). Functionally, catalyzes the hydrolysis of 4-amino-2-methyl-5-hydroxymethylpyrimidine pyrophosphate (HMP-PP) to 4-amino-2-methyl-5-hydroxymethylpyrimidine phosphate (HMP-P). In Salmonella newport (strain SL254), this protein is HMP-PP phosphatase.